A 254-amino-acid polypeptide reads, in one-letter code: Countin-2 (254 aa).

The first 19 residues, 1 to 19 (MMIKYITIAILFIASLVKA), serve as a signal peptide directing secretion. Residues 22–107 (QFSLCPTCVD…EELTVCPKNQ (86 aa)) form the Saposin B-type domain. Disulfide bonds link Cys26/Cys103, Cys29/Cys97, and Cys56/Cys68. N-linked (GlcNAc...) asparagine glycans are attached at residues Asn110 and Asn219. The interval 231-254 (QMTGTGSGSGSGSGSSSGAAYLRY) is disordered. The span at 233-245 (TGTGSGSGSGSGS) shows a compositional bias: gly residues.

This sequence belongs to the countin family.

It localises to the secreted. In terms of biological role, cell-counting factor that limits the minimum size of the multicellular structure. May up-regulate the expression of both gp24 and gp80, which mediate cell adhesion. The protein is Countin-2 (ctnB) of Dictyostelium discoideum (Social amoeba).